Reading from the N-terminus, the 154-residue chain is Large ribosomal subunit protein bL9c (154 aa).

It belongs to the bacterial ribosomal protein bL9 family.

The protein localises to the plastid. The protein resides in the chloroplast. Functionally, binds to the 23S rRNA. The chain is Large ribosomal subunit protein bL9c from Gracilaria tenuistipitata var. liui (Red alga).